The primary structure comprises 605 residues: Putative glutaminase 2 (605 aa).

Substrate is bound by residues serine 213, asparagine 262, glutamate 308, asparagine 315, tyrosine 342, tyrosine 394, and valine 412. ANK repeat units lie at residues 480–509 (DRLI…DLNT) and 513–543 (DDRT…DVDK). The segment covering 569-581 (KAMKRPEQHRKDS) has biased composition (basic and acidic residues). The interval 569 to 605 (KAMKRPEQHRKDSVSSLDTDDEIDDDGFPEKPSFTID) is disordered. The segment covering 586–595 (DTDDEIDDDG) has biased composition (acidic residues).

Belongs to the glutaminase family.

The catalysed reaction is L-glutamine + H2O = L-glutamate + NH4(+). In Caenorhabditis elegans, this protein is Putative glutaminase 2 (glna-2).